Reading from the N-terminus, the 386-residue chain is uncharacterized protein (386 aa).

A run of 9 helical transmembrane segments spans residues 48–68 (NLIT…MLVY), 78–98 (PSWV…FDAI), 136–156 (LQLD…YFYI), 171–191 (YFSG…LTAI), 213–233 (FLPY…ALLL), 253–273 (VIKA…VFSL), 285–305 (FLTI…VVIV), 316–336 (WNVL…FGVL), and 344–364 (FFCY…HVIA).

Belongs to the CDP-alcohol phosphatidyltransferase class-I family.

It localises to the membrane. This is an uncharacterized protein from Schizosaccharomyces pombe (strain 972 / ATCC 24843) (Fission yeast).